The primary structure comprises 208 residues: Imidazole glycerol phosphate synthase subunit HisH (208 aa).

The 206-residue stretch at 1-206 (MIVIIDYDTG…KEVTYSCKSS (206 aa)) folds into the Glutamine amidotransferase type-1 domain. The Nucleophile role is filled by Cys79. Residues His181 and Glu183 contribute to the active site.

As to quaternary structure, heterodimer of HisH and HisF.

The protein resides in the cytoplasm. The enzyme catalyses 5-[(5-phospho-1-deoxy-D-ribulos-1-ylimino)methylamino]-1-(5-phospho-beta-D-ribosyl)imidazole-4-carboxamide + L-glutamine = D-erythro-1-(imidazol-4-yl)glycerol 3-phosphate + 5-amino-1-(5-phospho-beta-D-ribosyl)imidazole-4-carboxamide + L-glutamate + H(+). It catalyses the reaction L-glutamine + H2O = L-glutamate + NH4(+). The protein operates within amino-acid biosynthesis; L-histidine biosynthesis; L-histidine from 5-phospho-alpha-D-ribose 1-diphosphate: step 5/9. Its function is as follows. IGPS catalyzes the conversion of PRFAR and glutamine to IGP, AICAR and glutamate. The HisH subunit catalyzes the hydrolysis of glutamine to glutamate and ammonia as part of the synthesis of IGP and AICAR. The resulting ammonia molecule is channeled to the active site of HisF. The protein is Imidazole glycerol phosphate synthase subunit HisH of Listeria monocytogenes serovar 1/2a (strain ATCC BAA-679 / EGD-e).